The following is a 181-amino-acid chain: UPF0177 protein YbdI (181 aa).

A run of 5 helical transmembrane segments spans residues 10 to 30, 41 to 61, 81 to 101, 114 to 134, and 161 to 181; these read ILFLVILFIVLYIAIKTGVFA, LLWLLGFVIVGYILGNIAHYL, FVDSFLPTWFVYILMVVIAPI, FFSHKWLAYILSILLFTLIHT, and SDSIIVHGGYNLMVLIFHIII.

It belongs to the UPF0177 family.

The protein localises to the cell membrane. The sequence is that of UPF0177 protein YbdI (ybdI) from Lactococcus lactis subsp. lactis (strain IL1403) (Streptococcus lactis).